A 300-amino-acid chain; its full sequence is Bifunctional protein FolD 2 (300 aa).

NADP(+)-binding positions include Gly-166–Ser-168, Ser-191, and Ile-232.

Belongs to the tetrahydrofolate dehydrogenase/cyclohydrolase family. In terms of assembly, homodimer.

It catalyses the reaction (6R)-5,10-methylene-5,6,7,8-tetrahydrofolate + NADP(+) = (6R)-5,10-methenyltetrahydrofolate + NADPH. The catalysed reaction is (6R)-5,10-methenyltetrahydrofolate + H2O = (6R)-10-formyltetrahydrofolate + H(+). Its pathway is one-carbon metabolism; tetrahydrofolate interconversion. Its function is as follows. Catalyzes the oxidation of 5,10-methylenetetrahydrofolate to 5,10-methenyltetrahydrofolate and then the hydrolysis of 5,10-methenyltetrahydrofolate to 10-formyltetrahydrofolate. The polypeptide is Bifunctional protein FolD 2 (Roseobacter denitrificans (strain ATCC 33942 / OCh 114) (Erythrobacter sp. (strain OCh 114))).